Consider the following 404-residue polypeptide: Cytochrome b561 and DOMON domain-containing protein At2g04850 (404 aa).

The signal sequence occupies residues 1-22 (MATLILSFLLLLLATKLPESLA). The 131-residue stretch at 43–173 (QQASIAWTYH…TKIHHVWNRG (131 aa)) folds into the DOMON domain. Residues 180 to 380 (SPTIHPTTST…MEVNSWVVFC (201 aa)) form the Cytochrome b561 domain. Residues 217–237 (VTHGVVNAISWGFLLPAGAVT) form a helical membrane-spanning segment. His219 and His255 together coordinate heme b. The chain crosses the membrane as a helical span at residues 256 to 276 (AAIQLTGFLLGTIGFSIGIVL). Heme b is bound at residue His288. Residues 290–310 (SLGIATFTAAALQTLALLFRP) traverse the membrane as a helical segment. His324 is a heme b binding site. A run of 2 helical transmembrane segments spans residues 326–346 (FVGYACVVMGVVNVFQGFEVL) and 359–379 (LCLSTLVGVCVAMEVNSWVVF).

It depends on heme b as a cofactor.

Its subcellular location is the membrane. Its function is as follows. May act as a catecholamine-responsive trans-membrane electron transporter. This is Cytochrome b561 and DOMON domain-containing protein At2g04850 from Arabidopsis thaliana (Mouse-ear cress).